The sequence spans 485 residues: uncharacterized protein (485 aa).

Topologically, residues methionine 1–serine 30 are cytoplasmic. A helical membrane pass occupies residues glycine 31 to phenylalanine 51. The Extracellular segment spans residues cysteine 52–isoleucine 485. N-linked (GlcNAc...) asparagine glycosylation is present at asparagine 67. The interval serine 74 to aspartate 404 is phosphodiesterase. Threonine 118 serves as the catalytic Nucleophile. N-linked (GlcNAc...) asparagine glycans are attached at residues asparagine 306, asparagine 338, asparagine 453, and asparagine 467.

Belongs to the nucleotide pyrophosphatase/phosphodiesterase family.

It localises to the membrane. This is an uncharacterized protein from Schizosaccharomyces pombe (strain 972 / ATCC 24843) (Fission yeast).